The chain runs to 363 residues: Tetraacyldisaccharide 4'-kinase (363 aa).

62–69 provides a ligand contact to ATP; sequence RVGGTGKT.

Belongs to the LpxK family.

The catalysed reaction is a lipid A disaccharide + ATP = a lipid IVA + ADP + H(+). The protein operates within glycolipid biosynthesis; lipid IV(A) biosynthesis; lipid IV(A) from (3R)-3-hydroxytetradecanoyl-[acyl-carrier-protein] and UDP-N-acetyl-alpha-D-glucosamine: step 6/6. In terms of biological role, transfers the gamma-phosphate of ATP to the 4'-position of a tetraacyldisaccharide 1-phosphate intermediate (termed DS-1-P) to form tetraacyldisaccharide 1,4'-bis-phosphate (lipid IVA). In Polynucleobacter asymbioticus (strain DSM 18221 / CIP 109841 / QLW-P1DMWA-1) (Polynucleobacter necessarius subsp. asymbioticus), this protein is Tetraacyldisaccharide 4'-kinase.